We begin with the raw amino-acid sequence, 258 residues long: Type III pantothenate kinase (258 aa).

9–16 (DIGNTSVN) lines the ATP pocket. Substrate is bound at residue 110–113 (GADR). The active-site Proton acceptor is the Asp-112. Asp-132 lines the K(+) pocket. Thr-135 is an ATP binding site. Thr-187 serves as a coordination point for substrate.

It belongs to the type III pantothenate kinase family. Homodimer. Requires NH4(+) as cofactor. K(+) serves as cofactor.

Its subcellular location is the cytoplasm. The catalysed reaction is (R)-pantothenate + ATP = (R)-4'-phosphopantothenate + ADP + H(+). It functions in the pathway cofactor biosynthesis; coenzyme A biosynthesis; CoA from (R)-pantothenate: step 1/5. Catalyzes the phosphorylation of pantothenate (Pan), the first step in CoA biosynthesis. The sequence is that of Type III pantothenate kinase from Dehalococcoides mccartyi (strain ATCC BAA-2266 / KCTC 15142 / 195) (Dehalococcoides ethenogenes (strain 195)).